Here is a 418-residue protein sequence, read N- to C-terminus: NADH-quinone oxidoreductase subunit D (418 aa).

The protein belongs to the complex I 49 kDa subunit family. In terms of assembly, NDH-1 is composed of 14 different subunits. Subunits NuoB, C, D, E, F, and G constitute the peripheral sector of the complex.

The protein resides in the cell inner membrane. It carries out the reaction a quinone + NADH + 5 H(+)(in) = a quinol + NAD(+) + 4 H(+)(out). Functionally, NDH-1 shuttles electrons from NADH, via FMN and iron-sulfur (Fe-S) centers, to quinones in the respiratory chain. The immediate electron acceptor for the enzyme in this species is believed to be ubiquinone. Couples the redox reaction to proton translocation (for every two electrons transferred, four hydrogen ions are translocated across the cytoplasmic membrane), and thus conserves the redox energy in a proton gradient. This is NADH-quinone oxidoreductase subunit D from Neisseria meningitidis serogroup C / serotype 2a (strain ATCC 700532 / DSM 15464 / FAM18).